Here is a 463-residue protein sequence, read N- to C-terminus: MHKFFPRSGFFDFETVRILGTACYGGADVAEVLEAVGEIKSDDAASWEEAWRRQSWWAEALADQAREGGDREAARRAYLRASNYARASGYMYVSDLGAEGGNAPPTQDPRALPVAEKVGRLFRKALALMEGEVRALSIPCGAQALPGLLYLPPPGKRIPGRDKIPVLVFLGGADSCQEELYYLYPAAGPGLGYAVLTFDGPGQGIVLRKHGLRVRPDWEVVTSSVLDYLEAYSAQHPGLELDMKAIAVSGASMGGYYALRSAVDRRVKACVSIDPFYDMWDFGTAHVSPLFISAWTSGIISSGFVDKLMTVVSRLWFQMKWEIALTGTLFGLSSPSQILLNMKNYTLSGKSDGSRANGKKSHSPTDGGGVESDSFLSEVRCPVFLSGAGKSLYLDVDSHTRRCYDGLTGVAAKDKELWVPESEGQGSLQAKMGALALCNQKTFQFLDKVLGVQRVPLDVSAHI.

Ser-252 (nucleophile) is an active-site residue. Positions 350–373 are disordered; the sequence is KSDGSRANGKKSHSPTDGGGVESD.

This sequence belongs to the AB hydrolase superfamily. FUS2 hydrolase family. Homodimer.

It functions in the pathway mycotoxin biosynthesis. Functionally, hydrolyase; part of the gene cluster that mediates the biosynthesis of the mycotoxin pyrichalasin H, a tyrosine-derived cytochalasan that inhibits the growth of rice seedlings, but also inhibits lymphocyte capping and actin polymerization and alters cell morphology. Pyrichalasin H is indicated as the responsible agent for the genus-specific pathogenicity of M.grisea toward crabgrass. The first step in the pathway is catalyzed by the O-methyltransferase pyiA which methylates free tyrosine to generate the precursor O-methyltyrosine. The hybrid PKS-NRPS pyiS, assisted by the enoyl reductase pyiC, are responsible for fusion of the O-methyltyrosine precursor and the polyketide backbone. The polyketide synthase module (PKS) of pyiS is responsible for the synthesis of the polyketide backbone and the downstream nonribosomal peptide synthetase (NRPS) amidates the carboxyl end of the polyketide with the O-methyltyrosine precursor. As the NRPS A-domain demonstrates substrate tolerance, pyiS can also use phenylalanine, tyrosine and even para-chlorophenylalanine as amino acid precursor, which leads to the production of novel cytochalasans, including halogenated cytochalasans. Because pyiS lacks a designated enoylreductase (ER) domain, the required activity is provided the enoyl reductase pyiC. Reduction by the hydrolyase pyiE leads to 1,5-dihydropyrrolone, which is substrate for dehydration and intra-molecular Diels-Alder cyclization by the Diels-Alderase pyiF to yield the required isoindolone-fused macrocycle. The tailoring cytochrome P450 monooxygenases piyD and piyG catalyze the hydroxylation at C-18 and C-7, respectivily, whereas the short-chain dehydrogenase/reductase pyiH reduces the carbonyl at C-21 in preparation for the transfer of an acetyl group by the acetyltransferase pyiB. These 3 reactions whose order is not clear yet, lead to the production of O-methylpyrichalasin J, a deacetylated pyrichalasin H. Finally, pyiB to converts O-methylpyrichalasin J into the final product pyrichalasin H via acetylation of C-21. The polypeptide is Hydrolase pyiE (Pyricularia grisea (Crabgrass-specific blast fungus)).